The primary structure comprises 1507 residues: DDB1- and CUL4-associated factor 1 (1507 aa).

Positions 141–500 (QPLRTYSTGL…STLEILNLED (360 aa)) are protein kinase-like. Ser-202 and Ser-255 each carry phosphoserine. Residues 242–288 (HLDSGHKTSSRVNSTTKPEDGGLKKNKSAKQGDRENFRKAKQKLGFS) are disordered. Residues 562–593 (SYTHEQIVEMMEFLIEYGPAQLYWEPAEVFLK) form the Chromo domain. Lys-701 is modified (N6-acetyllysine). At Ser-828 the chain carries Phosphoserine. The LisH domain occupies 846–878 (PEKELLLLIRNHLISKGLGETATVLTKEADLPM). The residue at position 888 (Thr-888) is a Phosphothreonine. Ser-895 and Ser-898 each carry phosphoserine. The tract at residues 917 to 947 (AAVGASAPSAPTAHPQPRPPQGPLALPGPSY) is disordered. A phosphoserine mark is found at Ser-979 and Ser-1000. WD repeat units follow at residues 1091-1130 (EDES…EEAS), 1133-1174 (CHNS…DMKH), 1176-1213 (FTED…KLLT), 1215-1247 (FNPD…WDVR), and 1248-1290 (SAQA…LLHT). Residues 1091 to 1290 (EDESGFTCCA…DLRTFHLLHT (200 aa)) are WD repeat-like region. 2 short sequence motifs (DWD box) span residues 1242-1249 (VLWDVRSA) and 1278-1285 (EIWDLRTF). Position 1328 is a phosphoserine (Ser-1328). Positions 1393–1507 (RLAEDEDEEE…EDDIILSLNE (115 aa)) are disordered. 2 stretches are compositionally biased toward acidic residues: residues 1396–1483 (EDED…EEVE) and 1490–1501 (DSSDNSDLEDDI). Positions 1418-1507 (DDDTDDLDEL…EDDIILSLNE (90 aa)) are interaction with NF2.

Belongs to the VPRBP/DCAF1 family. As to quaternary structure, component of the DCX (DDB1-CUL4-X-box) E3 ubiquitin-protein ligase complex, named CUL4A-RBX1-DDB1-DCAF1/VPRBP complex. Interacts with DDB1; the interaction is direct. Also forms a ternary complex with DDA1 and DDB1. Interacts with NF2 (via FERM domain). Component of the EDVP complex, a E3 ligase complex containing DYRK2, EDD/UBR5, DDB1 and DCAF1. Interacts with DYRK2; the interaction is direct. Interacts with RAG1; the interaction is direct. Interacts with LLGL1 and LLGL2. Interacts with histone H3. Interacts with ESR1 and LATS1; probably recruited by LATS1 to promote ESR1 ubiquitination and ubiquitin-mediated proteasomal degradation. Directly interacts with TET1, TET2 and TET3 (via C-terminus). Interacts with CEP78; promoting DCAF1 localization to centrosomes. (Microbial infection) Interacts with HIV-1 virus Vpr protein; the interaction is direct. In terms of assembly, (Microbial infection) Interacts with HIV-2 virus Vpx protein; the interaction is direct and the complex recruits SAMHD1 to promote its ubiquitin-dependent proteasomal degradation. As to quaternary structure, (Microbial infection) Interacts (via C-terminus) with human cytomegalovirus protein UL35; this interaction induces the accumulation of cells in the G2 phase of the cell cycle. Ubiquitously expressed.

The protein resides in the cytoplasm. The protein localises to the nucleus. It localises to the cytoskeleton. It is found in the microtubule organizing center. Its subcellular location is the centrosome. The catalysed reaction is L-seryl-[protein] + ATP = O-phospho-L-seryl-[protein] + ADP + H(+). The enzyme catalyses L-threonyl-[protein] + ATP = O-phospho-L-threonyl-[protein] + ADP + H(+). It participates in protein modification; protein ubiquitination. Its function is as follows. Acts both as a substrate recognition component of E3 ubiquitin-protein ligase complexes and as an atypical serine/threonine-protein kinase, playing key roles in various processes such as cell cycle, telomerase regulation and histone modification. Probable substrate-specific adapter of a DCX (DDB1-CUL4-X-box) E3 ubiquitin-protein ligase complex, named CUL4A-RBX1-DDB1-DCAF1/VPRBP complex, which mediates ubiquitination and proteasome-dependent degradation of proteins such as NF2. Involved in the turnover of methylated proteins: recognizes and binds methylated proteins via its chromo domain, leading to ubiquitination of target proteins by the RBX1-DDB1-DCAF1/VPRBP complex. The CUL4A-RBX1-DDB1-DCAF1/VPRBP complex is also involved in B-cell development: DCAF1 is recruited by RAG1 to ubiquitinate proteins, leading to limit error-prone repair during V(D)J recombination. Also part of the EDVP complex, an E3 ligase complex that mediates ubiquitination of proteins such as TERT, leading to TERT degradation and telomerase inhibition. The EDVP complex also mediates ubiquitination and degradation of CCP110. Also acts as an atypical serine/threonine-protein kinase that specifically mediates phosphorylation of 'Thr-120' of histone H2A (H2AT120ph) in a nucleosomal context, thereby repressing transcription. H2AT120ph is present in the regulatory region of many tumor suppresor genes, down-regulates their transcription and is present at high level in a number of tumors. Involved in JNK-mediated apoptosis during cell competition process via its interaction with LLGL1 and LLGL2. By acting on TET dioxygenses, essential for oocyte maintenance at the primordial follicle stage, hence essential for female fertility. Functionally, (Microbial infection) In case of infection by HIV-1 virus, it is recruited by HIV-1 Vpr in order to hijack the CUL4A-RBX1-DDB1-DCAF1/VPRBP function leading to arrest the cell cycle in G2 phase, and also to protect the viral protein from proteasomal degradation by another E3 ubiquitin ligase. The HIV-1 Vpr protein hijacks the CUL4A-RBX1-DDB1-DCAF1/VPRBP complex to promote ubiquitination and degradation of proteins such as TERT and ZIP/ZGPAT. (Microbial infection) In case of infection by HIV-2 virus, it is recruited by HIV-2 Vpx in order to hijack the CUL4A-RBX1-DDB1-DCAF1/VPRBP function leading to enhanced efficiency of macrophage infection and promotion of the replication of cognate primate lentiviruses in cells of monocyte/macrophage lineage. The sequence is that of DDB1- and CUL4-associated factor 1 from Homo sapiens (Human).